The chain runs to 261 residues: Calbindin (261 aa).

At Ala-2 the chain carries N-acetylalanine. Residues 2-7 (AESHLQ) are interaction with RANBP9. EF-hand domains lie at 11-46 (ITASQFFEIWLHFDADGSGYLEGKELQNLIQELLQA), 53-88 (ELSPEMKSFVDQYGQRDDGKIGIVELAHVLPTEENF), 98-133 (KSCEEFMKTWRKYDTDHSGFIETEELKNFLKDLLEK), 142-177 (KLAEYTDLMLKLFDSNNDGKLELTEMARLLPVQENF), and 186-221 (MCGKEFNKAFELYDQDGNGYIDENELDALLKDLCEK). Ca(2+) is bound by residues Asp-24, Asp-26, Ser-28, Tyr-30, and Glu-35. Ca(2+) contacts are provided by Asp-111, Asp-113, Ser-115, Glu-122, Asp-155, Asn-157, Asp-159, Lys-161, Glu-166, Asp-199, Asp-201, Asn-203, Tyr-205, and Glu-210.

The protein belongs to the calbindin family. As to quaternary structure, interacts with RANBP9. In terms of tissue distribution, expressed in the modiolar nerve root and in bushy neurons in the ventral cochlear nucleus (at protein level).

Its function is as follows. Buffers cytosolic calcium. May stimulate a membrane Ca(2+)-ATPase and a 3',5'-cyclic nucleotide phosphodiesterase. This Mus musculus (Mouse) protein is Calbindin (Calb1).